Reading from the N-terminus, the 272-residue chain is HMP-PP phosphatase (272 aa).

The active-site Nucleophile is aspartate 8. Mg(2+)-binding residues include aspartate 8, aspartate 10, and aspartate 212.

It belongs to the HAD-like hydrolase superfamily. Cof family. The cofactor is Mg(2+).

The catalysed reaction is 4-amino-2-methyl-5-(diphosphooxymethyl)pyrimidine + H2O = 4-amino-2-methyl-5-(phosphooxymethyl)pyrimidine + phosphate + H(+). In terms of biological role, catalyzes the hydrolysis of 4-amino-2-methyl-5-hydroxymethylpyrimidine pyrophosphate (HMP-PP) to 4-amino-2-methyl-5-hydroxymethylpyrimidine phosphate (HMP-P). The chain is HMP-PP phosphatase from Citrobacter koseri (strain ATCC BAA-895 / CDC 4225-83 / SGSC4696).